Reading from the N-terminus, the 134-residue chain is Natriuretic peptides B (134 aa).

A signal peptide spans 1–26; sequence MDPQTAPSRALLLLLFLHLAFLGGRS. O-linked (Xyl...) (chondroitin sulfate) serine glycosylation is present at Ser41. O-linked (HexNAc...) threonine; Partial glycosylation is present at Thr62. Residues Ser63 and Ser70 are each glycosylated (O-linked (HexNAc...) serine). Thr74 carries O-linked (HexNAc...) threonine glycosylation. An O-linked (HexNAc...) serine glycan is attached at Ser79. Residue Thr84 is glycosylated (O-linked (HexNAc...) threonine; Partial). O-linked (HexNAc...) threonine glycosylation occurs at Thr97. A disulfide bond links Cys112 and Cys128.

This sequence belongs to the natriuretic peptide family. In terms of processing, the precursor molecule is proteolytically cleaved by the endoproteases FURIN or CORIN at Arg-102 to produce brain natriuretic peptide 32 and NT-proBNP. This likely occurs after it has been secreted into the blood, either during circulation or in the target cells. CORIN also cleaves the precursor molecule at additional residues including Arg-99 and possibly Lys-105. In patients with heart failure, processing and degradation of natriuretic peptides B occurs but is delayed, possibly due to a decrease in enzyme level or activity of CORIN and DPP4. Post-translationally, undergoes further proteolytic cleavage by various proteases such as DPP4, MME and possibly FAP, to give rise to a variety of shorter peptides. Cleaved at Pro-104 by the prolyl endopeptidase FAP (seprase) activity (in vitro). Degraded by IDE. During IDE degradation, the resulting products initially increase the activation of NPR1 and can also stimulate NPR2 to produce cGMP before the fragments are completely degraded and inactivated by IDE (in vitro). O-glycosylated on at least seven residues. In cardiomyocytes, glycosylation at Thr-97 is essential for the stability and processing of the extracellular natriuretic peptides B. Glycosylation, especially at Thr-97, may also be important for brain natriuretic peptide 32 stability and/or extracellular distribution. Glycosylation at Thr-97 appears to inhibit FURIN- or CORIN-mediated proteolytic processing, at least in HEK293 cells. Detected in the cardiac atria (at protein level). Detected in the kidney distal tubular cells (at protein level).

It is found in the secreted. Cardiac hormone that plays a key role in mediating cardio-renal homeostasis. May also function as a paracrine antifibrotic factor in the heart. Acts by specifically binding and stimulating NPR1 to produce cGMP, which in turn activates effector proteins that drive various biological responses. Involved in regulating the extracellular fluid volume and maintaining the fluid-electrolyte balance through natriuresis, diuresis, vasorelaxation, and inhibition of renin and aldosterone secretion. Binds the clearance receptor NPR3. Its function is as follows. May affect cardio-renal homeostasis. Able to promote the production of cGMP although its potency is very low compared to brain natriuretic peptide 32. In terms of biological role, may have a role in cardio-renal homeostasis. Able to promote the production of cGMP. This is Natriuretic peptides B (NPPB) from Homo sapiens (Human).